A 311-amino-acid polypeptide reads, in one-letter code: Transcription factor bHLH145 (311 aa).

The bHLH domain occupies 253–302; sequence FLKRSKLSSNKIGEEKIFETVSLLRSVVPGEELVDPILVIDRAIDYLKSL.

In terms of assembly, homodimer.

It is found in the nucleus. The polypeptide is Transcription factor bHLH145 (BHLH145) (Arabidopsis thaliana (Mouse-ear cress)).